An 88-amino-acid chain; its full sequence is MKTTLPISLDWSTEEVIDVVHFFQAIEQAYDQGIAREDLLGKYRRFKEIVPSKSEEKQLFRAYEQENDVSCYQTIKKAREEMEEHIQM.

The protein belongs to the UPF0223 family.

The polypeptide is UPF0223 protein BH2638 (Halalkalibacterium halodurans (strain ATCC BAA-125 / DSM 18197 / FERM 7344 / JCM 9153 / C-125) (Bacillus halodurans)).